A 257-amino-acid polypeptide reads, in one-letter code: Succinate dehydrogenase subunit 5, mitochondrial (257 aa).

The N-terminal 89 residues, 1 to 89 (MGTLGRAIHT…AMGMGQVRRF (89 aa)), are a transit peptide targeting the mitochondrion.

Component of complex II composed of eight subunits in plants: four classical SDH subunits SDH1, SDH2, SDH3 and SDH4 (a flavoprotein (FP), an iron-sulfur protein (IP), and a cytochrome b composed of a large and a small subunit.), as well as four subunits unknown in mitochondria from bacteria and heterotrophic eukaryotes.

It is found in the mitochondrion inner membrane. It functions in the pathway carbohydrate metabolism; tricarboxylic acid cycle. The polypeptide is Succinate dehydrogenase subunit 5, mitochondrial (Arabidopsis thaliana (Mouse-ear cress)).